Reading from the N-terminus, the 247-residue chain is DNA polymerase sliding clamp 1 (247 aa).

It belongs to the PCNA family. In terms of assembly, homotrimer. The subunits circularize to form a toroid; DNA passes through its center. Replication factor C (RFC) is required to load the toroid on the DNA.

Sliding clamp subunit that acts as a moving platform for DNA processing. Responsible for tethering the catalytic subunit of DNA polymerase and other proteins to DNA during high-speed replication. The sequence is that of DNA polymerase sliding clamp 1 from Sulfolobus acidocaldarius (strain ATCC 33909 / DSM 639 / JCM 8929 / NBRC 15157 / NCIMB 11770).